Reading from the N-terminus, the 439-residue chain is MFSKLAHLQRFAVLSRGVHSSVASATSVATKKTVQGPPTSDDIFEREYKYGAHNYHPLPVALERGKGIYLWDVEGRKYFDFLSSYSAVNQGHCHPKIVNALKSQVDKLTLTSRAFYNNVLGEYEEYITKLFNYHKVLPMNTGVEAGETACKLARKWGYTVKGIQKYKAKIVFAAGNFWGRTLSAISSSTDPTSYDGFGPFMPGFDIIPYNDLPALERALQDPNVAAFMVEPIQGEAGVVVPDPGYLMGVRELCTRHQVLFIADEIQTGLARTGRWLAVDYENVRPDIVLLGKALSGGLYPVSAVLCDDDIMLTIKPGEHGSTYGGNPLGCRVAIAALEVLEEENLAENADKLGIILRNELMKLPSDVVTAVRGKGLLNAIVIKETKDWDAWKVCLRLRDNGLLAKPTHGDIIRFAPPLVIKEDELRESIEIINKTILSF.

Residues 1–25 constitute a mitochondrion; in hepatic form transit peptide; it reads MFSKLAHLQRFAVLSRGVHSSVASA. The N-terminal 35 residues, 1-35, are a transit peptide targeting the mitochondrion; in renal form; the sequence is MFSKLAHLQRFAVLSRGVHSSVASATSVATKKTVQ. 2 positions are modified to N6-acetyllysine: lysine 49 and lysine 66. N6-succinyllysine is present on lysine 102. Lysine 107 bears the N6-acetyllysine; alternate mark. At lysine 107 the chain carries N6-succinyllysine; alternate. The residue at position 292 (lysine 292) is an N6-(pyridoxal phosphate)lysine. The residue at position 362 (lysine 362) is an N6-acetyllysine; alternate. Lysine 362 bears the N6-succinyllysine; alternate mark. N6-acetyllysine occurs at positions 386 and 392. Lysine 405 carries the post-translational modification N6-acetyllysine; alternate. Lysine 405 carries the post-translational modification N6-succinyllysine; alternate. Residue lysine 421 is modified to N6-acetyllysine.

It belongs to the class-III pyridoxal-phosphate-dependent aminotransferase family. In terms of assembly, homohexamer. Pyridoxal 5'-phosphate serves as cofactor.

The protein resides in the mitochondrion matrix. It catalyses the reaction L-ornithine + 2-oxoglutarate = L-glutamate 5-semialdehyde + L-glutamate. It participates in amino-acid biosynthesis; L-proline biosynthesis; L-glutamate 5-semialdehyde from L-ornithine: step 1/1. Its function is as follows. Catalyzes the reversible interconversion of L-ornithine and 2-oxoglutarate to L-glutamate semialdehyde and L-glutamate. The sequence is that of Ornithine aminotransferase, mitochondrial (OAT) from Homo sapiens (Human).